Consider the following 776-residue polypeptide: Cullin-1 (776 aa).

An Omega-N-methylarginine modification is found at Arg-63. Residues 706-766 (DRKLLIQAAI…IEKEYLERVD (61 aa)) enclose the Cullin neddylation domain. Residue Lys-720 forms a Glycyl lysine isopeptide (Lys-Gly) (interchain with G-Cter in NEDD8) linkage.

The protein belongs to the cullin family. As to quaternary structure, component of multiple Cul1-RING E3 ubiquitin-protein ligase complexes commonly known as SCF (SKP1-CUL1-F-box) complexes, consisting of CUL1, SKP1, RBX1 and a variable F-box domain-containing protein as substrate-specific subunit. Component of the SCF(FBXW11) complex containing FBXW11. Component of the SCF(SKP2) complex containing SKP2, in which it interacts directly with SKP1, SKP2 and RBX1. Component of the SCF(FBXW2) complex containing FBXW2. Component of the SCF(FBXO32) complex containing FBXO32. Component of the probable SCF(FBXO7) complex containing FBXO7. Component of the SCF(FBXO10) complex containing FBXO10. Component of the SCF(FBXO11) complex containing FBXO11. Component of the SCF(FBXO25) complex containing FBXO25. Component of the SCF(FBXO33) complex containing FBXO33. Component of the probable SCF(FBXO4) complex containing FBXO4. Component of the SCF(FBXO44) complex, composed of SKP1, CUL1 and FBXO44. Component of the SCF(BTRC) complex, composed of SKP1, CUL1 and BTRC. This complex binds phosphorylated NFKBIA. Part of a SCF complex consisting of CUL1, RBX1, SKP1 and FBXO2. Component of a SCF(SKP2)-like complex containing CUL1, SKP1, TRIM21 and SKP2. Component of the SCF(FBXO17) complex, composed of SKP1, CUL1 and FBXO17. Component of the SCF(FBXO27) complex, composed of SKP1, CUL1 and FBXO27. Component of the SCF(CCNF) complex consisting of CUL1, RBX1, SKP1 and CCNF. Interacts with CCNF. Component of the SCF(FBXL3) complex composed of CUL1, SKP1, RBX1 and FBXL3. Component of the SCF(FBXL21) complex composed of CUL1, SKP1, RBX1 and FBXL21. Component of the SCF(FBXO9) composed of CUL1, SKP1, RBX1 and FBXO9. Component of the SCF(FBXW7) composed of CUL1, SKP1, RBX1 and FBXW7. Component of the SCF(FBXO31) complex composed of CUL1, SKP1, RBX1 and FBXO31. Interacts with CHEK2; mediates CHEK2 ubiquitination and regulates its function. Part of a complex with TIP120A/CAND1 and RBX1. The unneddylated form interacts with TIP120A/CAND1 and the interaction mediates the exchange of the F-box substrate-specific subunit. Can self-associate. Interacts with FBXW8. Interacts with RNF7. Interacts with TRIM21. Interacts with COPS2. Interacts with DCUN1D1 and UBE2M. Interacts with DCUN1D3. Interacts with DCUN1D4. Identified in a complex with RBX1 and GLMN. Interacts with CEP68 as part of the SCF(FBXW11) complex; the interaction is probably mediated by FBXW11 and the complex also contains CDK5RAP2 and PCNT. Interacts (when neddylated) with ARIH1; leading to activate the E3 ligase activity of ARIH1. Interacts with COPS9. Interacts with UBXN1. Interacts with KAT7, probably as part of an SCF complex; the interaction mediates KAT7 ubiquitination. Interacts with NOTCH2. Part of a complex that contains DCUN1D5, CUL1 and RBX1; this interaction is bridged by CUL1. Interacts (unneddylated form) with DCUN1D1, DCUN1D2, DCUN1D3, DCUN1D4 and DCUN1D5; these interactions promote the cullin neddylation. Interacts (via the C-terminal domain) with CUL7; the interaction seems to be mediated by FBXW8; it is likely specific to FBXW8, but not other F-box proteins. Interacts with UBR2, as part of SCF(BTRC) complex; the interaction mediates 'Lys-48'-linked ubiquitination of UBR2 and is regulated by DUSP22 in the T-cell receptor signaling pathway. (Microbial infection) Interacts with murine cytomegalovirus M48. Post-translationally, neddylated; which enhances the ubiquitination activity of SCF. Neddylation prevents binding of the inhibitor CAND1. Neddylation leads to structural rearrangment in the complex that allows interaction between the E2 ubiquitin-conjugating enzyme and the acceptor ubiquitin. Deneddylated via its interaction with the COP9 signalosome (CSN) complex. In terms of processing, (Microbial infection) Deneddylated by murine cytomegalovirus M48 leading to a S-phase-like environment that is required for efficient replication of the viral genome. As to expression, embryo fibroblasts and embryo preadipocytes.

The protein operates within protein modification; protein ubiquitination. In terms of biological role, core component of multiple cullin-RING-based SCF (SKP1-CUL1-F-box protein) E3 ubiquitin-protein ligase complexes, which mediate the ubiquitination of proteins involved in cell cycle progression, signal transduction and transcription. SCF complexes and ARIH1 collaborate in tandem to mediate ubiquitination of target proteins. In the SCF complex, serves as a rigid scaffold that organizes the SKP1-F-box protein and RBX1 subunits. May contribute to catalysis through positioning of the substrate and the ubiquitin-conjugating enzyme. The E3 ubiquitin-protein ligase activity of the complex is dependent on the neddylation of the cullin subunit and exchange of the substrate recognition component is mediated by TIP120A/CAND1. The functional specificity of the SCF complex depends on the F-box protein as substrate recognition component. SCF(BTRC) and SCF(FBXW11) direct ubiquitination of CTNNB1 and participate in Wnt signaling. SCF(FBXW11) directs ubiquitination of phosphorylated NFKBIA. SCF(BTRC) directs ubiquitination of NFKBIB, NFKBIE, ATF4, SMAD3, SMAD4, CDC25A, FBXO5 and probably NFKB2. SCF(BTRC) and/or SCF(FBXW11) direct ubiquitination of CEP68. SCF(SKP2) directs ubiquitination of phosphorylated CDKN1B/p27kip and is involved in regulation of G1/S transition. SCF(SKP2) directs ubiquitination of ORC1, CDT1, RBL2, ELF4, CDKN1A, RAG2, FOXO1A, and probably MYC and TAL1. SCF(FBXW7) directs ubiquitination of cyclin E, NOTCH1 released notch intracellular domain (NICD), and probably PSEN1. SCF(FBXW2) directs ubiquitination of GCM1. SCF(FBXO32) directs ubiquitination of MYOD1. SCF(FBXO7) directs ubiquitination of BIRC2 and DLGAP5. SCF(FBXO33) directs ubiquitination of YBX1. SCF(FBXO1) directs ubiquitination of BCL6 and DTL but does not seem to direct ubiquitination of TP53. SCF(BTRC) mediates the ubiquitination of NFKBIA at 'Lys-21' and 'Lys-22'; the degradation frees the associated NFKB1-RELA dimer to translocate into the nucleus and to activate transcription. SCF(CCNF) directs ubiquitination of CCP110. SCF(FBXL3) and SCF(FBXL21) direct ubiquitination of CRY1 and CRY2. SCF(FBXO9) directs ubiquitination of TTI1 and TELO2. SCF(FBXO10) directs ubiquitination of BCL2. Neddylated CUL1-RBX1 ubiquitinates p53/TP53 recruited by Cul7-RING(FBXW8) complex. SCF(BTRC) directs 'Lys-48'-linked ubiquitination of UBR2 in the T-cell receptor signaling pathway. The SCF(FBXO31) protein ligase complex specifically mediates the ubiquitination of proteins amidated at their C-terminus in response to oxidative stress. The sequence is that of Cullin-1 (Cul1) from Mus musculus (Mouse).